Reading from the N-terminus, the 315-residue chain is Oxalate oxidoreductase subunit delta (315 aa).

2 consecutive 4Fe-4S ferredoxin-type domains span residues 252 to 280 (QRPI…TRTE) and 281 to 310 (EGPV…NVPE). Residues C261, C264, C267, C271, C290, C293, C296, and C300 each coordinate [4Fe-4S] cluster.

As to quaternary structure, dimer of heterotrimer of one alpha, one beta and one delta subunit. The cofactor is [4Fe-4S] cluster.

It carries out the reaction oxidized 2[4Fe-4S]-[ferredoxin] + oxalate = reduced 2[4Fe-4S]-[ferredoxin] + 2 CO2. Functionally, catalyzes the anaerobic oxidation of oxalate using a broad range of electron acceptors, including ferredoxin and the nickel-dependent carbon monoxide dehydrogenase. Does not require coenzyme A as cosubstrate. Enables anaerobic growth on oxalate which is used as energy source by the bacteria. The sequence is that of Oxalate oxidoreductase subunit delta from Moorella thermoacetica (strain ATCC 39073 / JCM 9320).